Consider the following 281-residue polypeptide: NAD kinase (281 aa).

Asp-66 (proton acceptor) is an active-site residue. NAD(+) contacts are provided by residues 66 to 67, 137 to 138, Arg-148, Arg-165, Asp-167, and 178 to 183; these read DG, ND, and TAYSMS.

It belongs to the NAD kinase family. The cofactor is a divalent metal cation.

The protein localises to the cytoplasm. The enzyme catalyses NAD(+) + ATP = ADP + NADP(+) + H(+). Involved in the regulation of the intracellular balance of NAD and NADP, and is a key enzyme in the biosynthesis of NADP. Catalyzes specifically the phosphorylation on 2'-hydroxyl of the adenosine moiety of NAD to yield NADP. The sequence is that of NAD kinase from Chlorobium phaeovibrioides (strain DSM 265 / 1930) (Prosthecochloris vibrioformis (strain DSM 265)).